Here is a 211-residue protein sequence, read N- to C-terminus: Probable nicotinate-nucleotide adenylyltransferase (211 aa).

It belongs to the NadD family.

It catalyses the reaction nicotinate beta-D-ribonucleotide + ATP + H(+) = deamido-NAD(+) + diphosphate. Its pathway is cofactor biosynthesis; NAD(+) biosynthesis; deamido-NAD(+) from nicotinate D-ribonucleotide: step 1/1. Functionally, catalyzes the reversible adenylation of nicotinate mononucleotide (NaMN) to nicotinic acid adenine dinucleotide (NaAD). The protein is Probable nicotinate-nucleotide adenylyltransferase of Legionella pneumophila (strain Corby).